We begin with the raw amino-acid sequence, 542 residues long: MALASIFAEFKGLAAGVSLDNINPLYVAGGILGAFTVYSIILVVYRLRFHPLTGFPGPKLLAATTWYEAYVDLIHHDFPERLAKIHEKYGRDFLTIKLIVVPRSPRFSGPIVRVSPHEIHVNDAEFFHTVFATEAKHRTNIIPPRGLGQEDSIGSTRSHDMHQLRRKPLDKFMGQRNIVRQQSMIHEEIRVLDQAMTSLKGNGKPVRLDCVFTSFTGDIVGRLACGEAPQLLQGKDFTPEWYDMIRGAARIIPVLRHFPQVGEITQKMPNWLVQALVPRSAGFRVLQMLGAERIARVRAEVADEKKGVEGGESMFHYLLRSDLPESEKISARLNAEATSFMGAGTYPTAATLIFVAYYILADPKIEARLKNDLKDVMANFDDEVPNWEKVEQVEYLQACIKEGLRLLRLFRRKARIATDIDLTYGGYVIPKGTPVSLSPYTMHMDPDVFPEPTKFKPERWLVEDLDPRMNRNLNPFLAGSRNCIGMHVAWAQMYLILATLFRPNKNYSLKLGECDESDVYPVVDNEFGVAKYDSRGLNALVV.

Residues 25-45 form a helical membrane-spanning segment; the sequence is LYVAGGILGAFTVYSIILVVY. The segment at 141–160 is disordered; it reads IIPPRGLGQEDSIGSTRSHD. A helical membrane pass occupies residues 340-360; that stretch reads FMGAGTYPTAATLIFVAYYIL. C483 serves as a coordination point for heme. N-linked (GlcNAc...) asparagine glycosylation is present at N506.

The protein belongs to the cytochrome P450 family. Heme serves as cofactor.

The protein localises to the membrane. It participates in antibiotic biosynthesis. Cytochrome P450 monooxygenase; part of the gene cluster that mediates the biosynthesis of sordarin and hypoxysordarin, glycoside antibiotics with a unique tetracyclic diterpene aglycone structure. First, the geranylgeranyl diphosphate synthase sdnC constructs GGDP from farnesyl diphosphate and isopentenyl diphosphate. The diterpene cyclase sdnA then catalyzes the cyclization of GGDP to afford cycloaraneosene. Cycloaraneosene is then hydroxylated four times by the putative cytochrome P450 monooxygenases sdnB, sdnE, sdnF and sdnH to give a hydroxylated cycloaraneosene derivative such as cycloaraneosene-8,9,13,19-tetraol. Although the order of the hydroxylations is unclear, at least C8, C9 and C13 of the cycloaraneosene skeleton are hydroxylated before the sordaricin formation. Dehydration of the 13-hydroxy group of the hydroxylated cycloaraneosene derivative might be catalyzed by an unassigned hypothetical protein such as sdnG and sdnP to construct the cyclopentadiene moiety. The FAD-dependent oxidoreductase sdnN is proposed to catalyze the oxidation at C9 of the hydroxylated cycloaraneosene derivative and also catalyze the Baeyer-Villiger oxidation to give the lactone intermediate. The presumed lactone intermediate would be hydrolyzed to give an acrolein moiety and a carboxylate moiety. Then, [4+2]cycloaddition would occur between the acrolein moiety and the cyclopentadiene moiety to give sordaricin. SdnN might also be involved in the [4+2]cycloaddition after the hypothesized oxidation to accommodate the oxidized product and prompt the [4+2]cycloaddition. GDP-6-deoxy-D-altrose may be biosynthesized from GDP-D-mannose by the putative GDP-mannose-4,6-dehydratase sdnI and the short-chain dehydrogenase sdnK. The glycosyltransferase sdnJ catalyzes the attachment of 6-deoxy-D-altrose onto the 19-hydroxy group of sordaricin to give 4'-O-demethylsordarin. The methyltransferase sdnD would complete the biosynthesis of sordarin. Sordarin can be further modified into hypoxysordarin. The unique acyl chain at the 3'-hydroxy group of hypoxysordarin would be constructed by an iterative type I PKS sdnO and the trans-acting polyketide methyltransferase sdnL. SdnL would be responsible for the introduction of an alpha-methyl group of the polyketide chain. Alternatively, the beta-lactamase-like protein sdnR might be responsible for the cleavage and transfer of the polyketide chain from the PKS sdnO to sordarin. Two putative cytochrome P450 monooxygenases, sdnQ and sdnT, might catalyze the epoxidations of the polyketide chain to complete the biosynthesis of hypoxysordarin. Transcriptional regulators sdnM and sdnS are presumably encoded for the transcriptional regulation of the expression of the sdn gene cluster. This chain is Cytochrome P450 monooxygenase sdnH, found in Sordaria araneosa (Pleurage araneosa).